The following is a 364-amino-acid chain: Dihydroorotate dehydrogenase (quinone) (364 aa).

FMN contacts are provided by residues 61 to 65 and S85; that span reads AGFDK. K65 serves as a coordination point for substrate. 110-114 is a substrate binding site; the sequence is NRMGF. FMN is bound by residues N139 and N170. Substrate is bound at residue N170. S173 serves as the catalytic Nucleophile. N175 contacts substrate. The FMN site is built by K214 and S242. 243-244 is a binding site for substrate; it reads NT. Residues G266, G295, and 316-317 contribute to the FMN site; that span reads YS.

This sequence belongs to the dihydroorotate dehydrogenase family. Type 2 subfamily. Monomer. The cofactor is FMN.

The protein resides in the cell membrane. The enzyme catalyses (S)-dihydroorotate + a quinone = orotate + a quinol. It functions in the pathway pyrimidine metabolism; UMP biosynthesis via de novo pathway; orotate from (S)-dihydroorotate (quinone route): step 1/1. In terms of biological role, catalyzes the conversion of dihydroorotate to orotate with quinone as electron acceptor. The protein is Dihydroorotate dehydrogenase (quinone) of Bradyrhizobium sp. (strain ORS 278).